The primary structure comprises 239 residues: Venom nerve growth factor (239 aa).

The first 18 residues, 1 to 18 (MSMLCYTLIIAFLIGIWA), serve as a signal peptide directing secretion. The propeptide occupies 19 to 125 (APKSEDNVPL…ALNRNIQAKR (107 aa)). Residues 47-66 (GLKTSRNTDQRHPAPKKADD) are compositionally biased toward basic and acidic residues. Positions 47-68 (GLKTSRNTDQRHPAPKKADDQE) are disordered. 3 disulfide bridges follow: cysteine 139-cysteine 203, cysteine 181-cysteine 231, and cysteine 191-cysteine 233.

It belongs to the NGF-beta family. Homodimer; non-covalently linked. Expressed by the venom gland.

Its subcellular location is the secreted. Functionally, nerve growth factor is important for the development and maintenance of the sympathetic and sensory nervous systems. It stimulates division and differentiation of sympathetic and embryonic sensory neurons as well as basal forebrain cholinergic neurons in the brain. Its relevance in the snake venom is not clear. However, it has been shown to inhibit metalloproteinase-dependent proteolysis of platelet glycoprotein Ib alpha, suggesting a metalloproteinase inhibition to prevent metalloprotease autodigestion and/or protection against prey proteases. Binds a lipid between the two protein chains in the homodimer. The lipid-bound form promotes histamine relase from mouse mast cells, contrary to the lipid-free form. The polypeptide is Venom nerve growth factor (Pseudechis porphyriacus (Red-bellied black snake)).